The sequence spans 605 residues: Exo-beta-1,3-glucanase (605 aa).

The disordered stretch occupies residues 1–23 (MHVPPTDPARSAPPASPHRRRRP). Residues 1–44 (MHVPPTDPARSAPPASPHRRRRPKALGLTALAAAMLMAVPTTQA) form the signal peptide. Substrate-binding positions include Gln174, 194–196 (YGW), Gln217, 446–449 (WRAD), and 480–481 (EH). Glu502 acts as the Proton donor in catalysis. Tyr505 contributes to the substrate binding site.

Belongs to the glycosyl hydrolase 55 family.

It is found in the secreted. The catalysed reaction is Successive hydrolysis of beta-D-glucose units from the non-reducing ends of (1-&gt;3)-beta-D-glucans, releasing alpha-glucose.. In terms of biological role, exo-beta-1,3-glucanase that specifically hydrolyzes laminarin and laminarioligosaccharides, producing glucose and laminaribiose as end products. The polypeptide is Exo-beta-1,3-glucanase (Streptomyces sp. (strain SirexAA-E / ActE)).